A 168-amino-acid chain; its full sequence is RNA pyrophosphohydrolase (168 aa).

A Nudix hydrolase domain is found at 8 to 160 (PYRTCVGIAL…KRPVYERVAK (153 aa)). Residues 47-68 (GGVDPGEDAWEAAKRELYEETS) carry the Nudix box motif.

This sequence belongs to the Nudix hydrolase family. RppH subfamily. Requires a divalent metal cation as cofactor.

Its function is as follows. Accelerates the degradation of transcripts by removing pyrophosphate from the 5'-end of triphosphorylated RNA, leading to a more labile monophosphorylated state that can stimulate subsequent ribonuclease cleavage. The chain is RNA pyrophosphohydrolase from Bradyrhizobium sp. (strain ORS 278).